Here is a 614-residue protein sequence, read N- to C-terminus: Vitamin B12 transporter BtuB (614 aa).

The N-terminal stretch at 1 to 20 (MIKKATLLTAFSVTAFSAWA) is a signal peptide. The short motif at 26–33 (DTLVVTAN) is the TonB box element. The TBDR plug domain maps to 38-152 (PRSAVLAPVT…IGGVVNIITT (115 aa)). Cyanocob(III)alamin-binding positions include S85, N92, and 110–111 (VS). One can recognise a TBDR beta-barrel domain in the interval 155–614 (NPGTELTAGW…EYTLSGSYTF (460 aa)). The next 3 beta stranded transmembrane spans lie at 158 to 165 (TELTAGWG), 169 to 178 (YQNYDISTQQ), and 184 to 195 (TRATLIGDYEYT). Ca(2+) is bound by residues D199, Q211, D213, and D215. 2 beta stranded membrane-spanning segments follow: residues 217–227 (FLSKTLYGALE) and 232–248 (DRWSGFVRGYGYDNRTD). Y249 and D250 together coordinate Ca(2+). A cyanocob(III)alamin-binding site is contributed by A251. Residue D261 participates in Ca(2+) binding. Transmembrane regions (beta stranded) follow at residues 263 to 277 (RKLYSQSWDAGLRFN), 279 to 296 (ERIQSQLVSSYSHSKDYN), 309 to 325 (TLDEMKQYNVQWTNSVV), 328 to 337 (HGNVGAGVDW), 353 to 369 (YDQRNTGVYLTGLQQLG), 371 to 381 (FTLEAAARSDD), 385 to 400 (FGRHGTWQTSAGWEFI), 403 to 417 (YRFIASYGTSYKAPN), 434 to 443 (KSKQWEGAFE), 449 to 458 (VSWRISGYRN), 473 to 490 (YYNEGKARIKGIEATANF), 494 to 509 (PLTHTVSYDYVDARNA), 517 to 529 (RRSKQMAKYQLDW), and 535 to 550 (DWGVTYQYLGSRYDSD). A cyanocob(III)alamin-binding site is contributed by T309. R517 lines the cyanocob(III)alamin pocket. Y551 is a binding site for cyanocob(III)alamin. 3 consecutive transmembrane segments (beta stranded) span residues 558 to 572 (TVKMGGVSLWDLTVA), 585 to 596 (IANLFDKDYETV), and 602 to 614 (AGREYTLSGSYTF). A TonB C-terminal box motif is present at residues 597-614 (YGYQTAGREYTLSGSYTF).

The protein belongs to the TonB-dependent receptor family. BtuB (TC 1.B.14.3.1) subfamily.

It is found in the cell outer membrane. Functionally, involved in the active translocation of vitamin B12 (cyanocobalamin) across the outer membrane to the periplasmic space. It derives its energy for transport by interacting with the trans-periplasmic membrane protein TonB. The protein is Vitamin B12 transporter BtuB of Salmonella choleraesuis (strain SC-B67).